Consider the following 422-residue polypeptide: Protein phosphatase methylesterase 1 (422 aa).

The tract at residues 1-27 (MSDMFRKSVLNKLPHLPPTRAPWADES) is disordered. Residues S207, D234, and H371 contribute to the active site.

It belongs to the AB hydrolase superfamily.

The enzyme catalyses [phosphatase 2A protein]-C-terminal L-leucine methyl ester + H2O = [phosphatase 2A protein]-C-terminal L-leucine + methanol + H(+). Demethylates proteins that have been reversibly carboxymethylated. Demethylates the phosphatase PP2A catalytic subunit. This chain is Protein phosphatase methylesterase 1 (PPE1), found in Cryptococcus neoformans var. neoformans serotype D (strain B-3501A) (Filobasidiella neoformans).